An 835-amino-acid polypeptide reads, in one-letter code: Leucine--tRNA ligase (835 aa).

The short motif at 36–46 is the 'HIGH' region element; it reads PYPSGKIHVGH. A 'KMSKS' region motif is present at residues 602-606; that stretch reads KMSKS. Residue Lys605 coordinates ATP.

The protein belongs to the class-I aminoacyl-tRNA synthetase family.

The protein localises to the cytoplasm. The enzyme catalyses tRNA(Leu) + L-leucine + ATP = L-leucyl-tRNA(Leu) + AMP + diphosphate. This Rickettsia felis (strain ATCC VR-1525 / URRWXCal2) (Rickettsia azadi) protein is Leucine--tRNA ligase.